We begin with the raw amino-acid sequence, 598 residues long: UvrABC system protein C (598 aa).

The region spanning 14–91 (DSPGCYLHKD…IQKNMPKYNI (78 aa)) is the GIY-YIG domain. The region spanning 196 to 231 (DKIIEDLRSKMLAASEEMAFERAAEYRDLISGIATM) is the UVR domain.

This sequence belongs to the UvrC family. In terms of assembly, interacts with UvrB in an incision complex.

The protein resides in the cytoplasm. In terms of biological role, the UvrABC repair system catalyzes the recognition and processing of DNA lesions. UvrC both incises the 5' and 3' sides of the lesion. The N-terminal half is responsible for the 3' incision and the C-terminal half is responsible for the 5' incision. In Streptococcus pyogenes serotype M18 (strain MGAS8232), this protein is UvrABC system protein C.